Consider the following 600-residue polypeptide: Glutamine--fructose-6-phosphate aminotransferase [isomerizing] (600 aa).

Cys2 functions as the Nucleophile; for GATase activity in the catalytic mechanism. Residues 2-217 (CGIVGFIGEQ…DKEIVIVMKE (216 aa)) form the Glutamine amidotransferase type-2 domain. 2 consecutive SIS domains span residues 283-422 (IRNA…AKGE) and 452-590 (LAKQ…VDKP). Lys595 serves as the catalytic For Fru-6P isomerization activity.

In terms of assembly, homodimer.

The protein localises to the cytoplasm. The catalysed reaction is D-fructose 6-phosphate + L-glutamine = D-glucosamine 6-phosphate + L-glutamate. Functionally, catalyzes the first step in hexosamine metabolism, converting fructose-6P into glucosamine-6P using glutamine as a nitrogen source. The protein is Glutamine--fructose-6-phosphate aminotransferase [isomerizing] of Bacillus thuringiensis subsp. konkukian (strain 97-27).